The sequence spans 543 residues: MTKFIFVTGGVVSSLGKGIAAASLGSLLEARGLKVSMLKMDPYINVDPGTMSPLQHGEVFVTDDGAETDLDLGHYERFVQRNFTKRNSFSTGQVYEKVIRNERRGDYLGGTVQVIPHITDEIKHRIKLAAAGADVALVEVGGTVGDIESLPFLEAIRQLGVEVGRDRAMFMHLTLLPYIAVAGEVKTKPTQHSVKELRSIGIQPDILICRSERPLEESEKRKIALFTNVEEKAVINSLDARTIYEVPRMLHEQGLDRLVTDRFRIDAPVADLSDWDDVVQAQLNPEKSVEIAMVGKYVDLTEAYKSLIEALIHGGIQTKTQVNIHYIDSEDLEKDGIGSIEKMDAILVPGGFGERGVEGKIAAIQFARENNVPYLGICLGMQMAVVEFARHVAGLPSAHSTELDPKTKTPVVALITEWTDENGQLVERDEKADLGGTMRLGGQSCALVEGSKMRDIYGEDVIRERHRHRYEVNDGYIAKLEAAGLKISGRSEDGNLVETVEIEDHPWFVACQFHPEFTSTPRNGHPLFKAFVEAASQHKQTTH.

The segment at 1–265 is amidoligase domain; it reads MTKFIFVTGG…DRLVTDRFRI (265 aa). Ser-13 lines the CTP pocket. Ser-13 serves as a coordination point for UTP. ATP is bound by residues 14–19 and Asp-71; that span reads SLGKGI. Residues Asp-71 and Glu-139 each contribute to the Mg(2+) site. CTP is bound by residues 146–148, 186–191, and Lys-222; these read DIE and KTKPTQ. UTP is bound by residues 186 to 191 and Lys-222; that span reads KTKPTQ. One can recognise a Glutamine amidotransferase type-1 domain in the interval 290-541; sequence EIAMVGKYVD…VEAASQHKQT (252 aa). Residue Gly-351 coordinates L-glutamine. The active-site Nucleophile; for glutamine hydrolysis is the Cys-378. L-glutamine contacts are provided by residues 379–382, Glu-402, and Arg-469; that span reads LGMQ. Active-site residues include His-514 and Glu-516.

The protein belongs to the CTP synthase family. In terms of assembly, homotetramer.

The catalysed reaction is UTP + L-glutamine + ATP + H2O = CTP + L-glutamate + ADP + phosphate + 2 H(+). It catalyses the reaction L-glutamine + H2O = L-glutamate + NH4(+). The enzyme catalyses UTP + NH4(+) + ATP = CTP + ADP + phosphate + 2 H(+). The protein operates within pyrimidine metabolism; CTP biosynthesis via de novo pathway; CTP from UDP: step 2/2. Allosterically activated by GTP, when glutamine is the substrate; GTP has no effect on the reaction when ammonia is the substrate. The allosteric effector GTP functions by stabilizing the protein conformation that binds the tetrahedral intermediate(s) formed during glutamine hydrolysis. Inhibited by the product CTP, via allosteric rather than competitive inhibition. Its function is as follows. Catalyzes the ATP-dependent amination of UTP to CTP with either L-glutamine or ammonia as the source of nitrogen. Regulates intracellular CTP levels through interactions with the four ribonucleotide triphosphates. The sequence is that of CTP synthase from Hydrogenovibrio crunogenus (strain DSM 25203 / XCL-2) (Thiomicrospira crunogena).